The sequence spans 144 residues: Cytochrome c-type biogenesis protein CcmE (144 aa).

Topologically, residues 1–7 (MKPRHKR) are cytoplasmic. A helical; Signal-anchor for type II membrane protein transmembrane segment spans residues 8-28 (ALIIIAALIAIGVAALLILNA). The Periplasmic portion of the chain corresponds to 29 to 144 (LNSNIALYVT…DQAQKNGSAK (116 aa)). Heme is bound by residues H121 and Y125.

Belongs to the CcmE/CycJ family.

The protein localises to the cell inner membrane. In terms of biological role, heme chaperone required for the biogenesis of c-type cytochromes. Transiently binds heme delivered by CcmC and transfers the heme to apo-cytochromes in a process facilitated by CcmF and CcmH. The chain is Cytochrome c-type biogenesis protein CcmE from Polynucleobacter necessarius subsp. necessarius (strain STIR1).